Reading from the N-terminus, the 417-residue chain is Tyrosine--tRNA ligase (417 aa).

L-tyrosine is bound at residue Tyr39. Positions Cys44–His53 match the 'HIGH' region motif. Residues Tyr176 and Gln180 each coordinate L-tyrosine. The short motif at Lys236–Thr240 is the 'KMSKS' region element. Position 239 (Lys239) interacts with ATP. Residues Ala350–Ala417 form the S4 RNA-binding domain.

This sequence belongs to the class-I aminoacyl-tRNA synthetase family. TyrS type 1 subfamily. As to quaternary structure, homodimer.

The protein localises to the cytoplasm. The catalysed reaction is tRNA(Tyr) + L-tyrosine + ATP = L-tyrosyl-tRNA(Tyr) + AMP + diphosphate + H(+). Catalyzes the attachment of tyrosine to tRNA(Tyr) in a two-step reaction: tyrosine is first activated by ATP to form Tyr-AMP and then transferred to the acceptor end of tRNA(Tyr). In Nitrobacter winogradskyi (strain ATCC 25391 / DSM 10237 / CIP 104748 / NCIMB 11846 / Nb-255), this protein is Tyrosine--tRNA ligase.